The chain runs to 397 residues: Urea transporter 2 (397 aa).

Transmembrane regions (helical) follow at residues 68 to 85, 92 to 109, 115 to 135, 143 to 163, and 172 to 192; these read VMFV…IGLF, AIAG…ALIL, AIAS…IAVF, WWLL…SSAL, and LPVF…ATGH. The N-linked (GlcNAc...) asparagine glycan is linked to Asn210. A run of 5 helical transmembrane segments spans residues 239–257, 264–280, 287–303, 309–329, and 331–351; these read WTGG…LICL, TMGM…FDSI, FNST…FYVI, LLAV…TNVL, and VFGL…FLLL.

It belongs to the urea transporter family. As to expression, kidney.

It is found in the apical cell membrane. Its subcellular location is the basolateral cell membrane. The enzyme catalyses urea(in) = urea(out). Inhibited by urea analogs and phloretin. In terms of biological role, mediates the transport of urea driven by a concentration gradient across the cell membrane of the renal inner medullary collecting duct which is critical to the urinary concentrating mechanism. The protein is Urea transporter 2 (SLC14A2) of Oryctolagus cuniculus (Rabbit).